The chain runs to 264 residues: Protein FAM228B (264 aa).

It belongs to the FAM228 family.

The protein is Protein FAM228B (FAM228B) of Bos taurus (Bovine).